A 310-amino-acid chain; its full sequence is Protoheme IX farnesyltransferase 2 (310 aa).

The next 9 membrane-spanning stretches (helical) occupy residues 25–45 (PGII…AAKG), 49–69 (LVLM…GCAI), 98–118 (HVLL…ALFT), 121–141 (LALL…SLYM), 145–165 (SVYG…VGYC), 176–196 (VILL…IAIF), 222–242 (IVLY…AGYT), 245–265 (AFMA…LKGY), and 277–297 (QVFG…ALDF).

It belongs to the UbiA prenyltransferase family. Protoheme IX farnesyltransferase subfamily.

Its subcellular location is the cell inner membrane. The enzyme catalyses heme b + (2E,6E)-farnesyl diphosphate + H2O = Fe(II)-heme o + diphosphate. The protein operates within porphyrin-containing compound metabolism; heme O biosynthesis; heme O from protoheme: step 1/1. Functionally, converts heme B (protoheme IX) to heme O by substitution of the vinyl group on carbon 2 of heme B porphyrin ring with a hydroxyethyl farnesyl side group. This chain is Protoheme IX farnesyltransferase 2, found in Shewanella sp. (strain MR-7).